A 505-amino-acid chain; its full sequence is Deoxyguanosinetriphosphate triphosphohydrolase (505 aa).

An HD domain is found at 66-273; the sequence is RLTHSMEVQQ…MEAADDISYC (208 aa).

Belongs to the dGTPase family. Type 1 subfamily. In terms of assembly, homotetramer. It depends on Mg(2+) as a cofactor.

It catalyses the reaction dGTP + H2O = 2'-deoxyguanosine + triphosphate + H(+). In terms of biological role, dGTPase preferentially hydrolyzes dGTP over the other canonical NTPs. The protein is Deoxyguanosinetriphosphate triphosphohydrolase of Escherichia coli O81 (strain ED1a).